A 380-amino-acid chain; its full sequence is Succinyl-diaminopimelate desuccinylase (380 aa).

His-71 provides a ligand contact to Zn(2+). The active site involves Asp-73. A Zn(2+)-binding site is contributed by Asp-104. Glu-136 serves as the catalytic Proton acceptor. Zn(2+) is bound by residues Glu-137, Glu-166, and His-351.

The protein belongs to the peptidase M20A family. DapE subfamily. Homodimer. Zn(2+) is required as a cofactor. Requires Co(2+) as cofactor.

The catalysed reaction is N-succinyl-(2S,6S)-2,6-diaminopimelate + H2O = (2S,6S)-2,6-diaminopimelate + succinate. It participates in amino-acid biosynthesis; L-lysine biosynthesis via DAP pathway; LL-2,6-diaminopimelate from (S)-tetrahydrodipicolinate (succinylase route): step 3/3. Its function is as follows. Catalyzes the hydrolysis of N-succinyl-L,L-diaminopimelic acid (SDAP), forming succinate and LL-2,6-diaminopimelate (DAP), an intermediate involved in the bacterial biosynthesis of lysine and meso-diaminopimelic acid, an essential component of bacterial cell walls. The protein is Succinyl-diaminopimelate desuccinylase of Ehrlichia canis (strain Jake).